The chain runs to 222 residues: Glutathione S-transferase A6 (222 aa).

Residues 3–83 (EKPLFHYDEA…YFSSKYNLYG (81 aa)) form the GST N-terminal domain. Residues tyrosine 9, arginine 45, 54–55 (QV), and 67–68 (QT) each bind glutathione. Residues 85-208 (DMKERALIDM…QPGSQRQPPV (124 aa)) enclose the GST C-terminal domain.

It belongs to the GST superfamily. Alpha family. In terms of assembly, homodimer or heterodimer of GSTA1 and GSTA2.

The protein resides in the cytoplasm. It carries out the reaction RX + glutathione = an S-substituted glutathione + a halide anion + H(+). Conjugation of reduced glutathione to a wide number of exogenous and endogenous hydrophobic electrophiles. The chain is Glutathione S-transferase A6 (Gsta6) from Rattus norvegicus (Rat).